Here is a 338-residue protein sequence, read N- to C-terminus: 4'-phosphopantetheinyl transferase (338 aa).

Belongs to the P-Pant transferase superfamily.

The enzyme catalyses apo-[ACP] + CoA = holo-[ACP] + adenosine 3',5'-bisphosphate + H(+). In terms of biological role, acyl-carrier-protein synthase that transfers the 4'-phosphopantetheine moiety from coenzyme A to a Ser of an acyl-carrier-protein. The 4'-phosphopantetheine (4'-PPT) portion of CoA provides the essential prosthetic group for a number of carrier proteins and multi-domain enzymes, priming them for the acceptance of acyl building blocks in fatty acid synthesis and many aspects of secondary metabolism mediated by polyketide synthases (PKSs) and non-ribosomal peptide synthetases (NRPSs). Plays a key role in liamocins biosynthesis by activationg the HR-PKS PKS1 that produces 3,5-dihydroxydecanoic acid, a precursor of liamocins. In Aureobasidium melanogenum (Aureobasidium pullulans var. melanogenum), this protein is 4'-phosphopantetheinyl transferase.